Consider the following 423-residue polypeptide: Kynureninase (423 aa).

Pyridoxal 5'-phosphate is bound by residues Leu-105, Ser-106, 133 to 136 (FPSD), Asp-218, His-221, and Tyr-243. Lys-244 carries the post-translational modification N6-(pyridoxal phosphate)lysine. Residues Trp-273 and Asn-301 each contribute to the pyridoxal 5'-phosphate site.

The protein belongs to the kynureninase family. In terms of assembly, homodimer. The cofactor is pyridoxal 5'-phosphate.

The catalysed reaction is L-kynurenine + H2O = anthranilate + L-alanine + H(+). The enzyme catalyses 3-hydroxy-L-kynurenine + H2O = 3-hydroxyanthranilate + L-alanine + H(+). It functions in the pathway amino-acid degradation; L-kynurenine degradation; L-alanine and anthranilate from L-kynurenine: step 1/1. Its pathway is cofactor biosynthesis; NAD(+) biosynthesis; quinolinate from L-kynurenine: step 2/3. Its function is as follows. Catalyzes the cleavage of L-kynurenine (L-Kyn) and L-3-hydroxykynurenine (L-3OHKyn) into anthranilic acid (AA) and 3-hydroxyanthranilic acid (3-OHAA), respectively. This chain is Kynureninase, found in Xanthomonas axonopodis pv. citri (strain 306).